The primary structure comprises 181 residues: MAVTNQMVAPRYAKALLEAAKDQNQVETVHEELQALQSVFNDNPTILTIFDNARITAADKDALMTTLTKDASPLVANLLKLTQQYGRFGALPAIISAFNQAYDEEAGIIAATVTTAVALSADQADALRSTIAARFGMKSTQLDQVVDPSVIGGVRIQARGSVIDGTVKHRFDKMKAALLAD.

This sequence belongs to the ATPase delta chain family. F-type ATPases have 2 components, F(1) - the catalytic core - and F(0) - the membrane proton channel. F(1) has five subunits: alpha(3), beta(3), gamma(1), delta(1), epsilon(1). F(0) has three main subunits: a(1), b(2) and c(10-14). The alpha and beta chains form an alternating ring which encloses part of the gamma chain. F(1) is attached to F(0) by a central stalk formed by the gamma and epsilon chains, while a peripheral stalk is formed by the delta and b chains.

It localises to the cell membrane. Functionally, f(1)F(0) ATP synthase produces ATP from ADP in the presence of a proton or sodium gradient. F-type ATPases consist of two structural domains, F(1) containing the extramembraneous catalytic core and F(0) containing the membrane proton channel, linked together by a central stalk and a peripheral stalk. During catalysis, ATP synthesis in the catalytic domain of F(1) is coupled via a rotary mechanism of the central stalk subunits to proton translocation. In terms of biological role, this protein is part of the stalk that links CF(0) to CF(1). It either transmits conformational changes from CF(0) to CF(1) or is implicated in proton conduction. This Lacticaseibacillus casei (strain BL23) (Lactobacillus casei) protein is ATP synthase subunit delta.